A 116-amino-acid chain; its full sequence is Aspartate 1-decarboxylase (116 aa).

Serine 25 acts as the Schiff-base intermediate with substrate; via pyruvic acid in catalysis. Serine 25 is modified (pyruvic acid (Ser)). Threonine 57 is a binding site for substrate. The active-site Proton donor is tyrosine 58. 73 to 75 (GAA) contributes to the substrate binding site.

This sequence belongs to the PanD family. As to quaternary structure, heterooctamer of four alpha and four beta subunits. Pyruvate serves as cofactor. Is synthesized initially as an inactive proenzyme, which is activated by self-cleavage at a specific serine bond to produce a beta-subunit with a hydroxyl group at its C-terminus and an alpha-subunit with a pyruvoyl group at its N-terminus.

Its subcellular location is the cytoplasm. The catalysed reaction is L-aspartate + H(+) = beta-alanine + CO2. The protein operates within cofactor biosynthesis; (R)-pantothenate biosynthesis; beta-alanine from L-aspartate: step 1/1. Its function is as follows. Catalyzes the pyruvoyl-dependent decarboxylation of aspartate to produce beta-alanine. This Phocaeicola vulgatus (strain ATCC 8482 / DSM 1447 / JCM 5826 / CCUG 4940 / NBRC 14291 / NCTC 11154) (Bacteroides vulgatus) protein is Aspartate 1-decarboxylase.